We begin with the raw amino-acid sequence, 629 residues long: tRNA uridine 5-carboxymethylaminomethyl modification enzyme MnmG (629 aa).

Residues 18–23 (GGGHAG), Val-130, and Ser-188 each bind FAD. 280–294 (GPRYCPSIEDKVVRF) is a binding site for NAD(+). Residue Gln-377 participates in FAD binding.

It belongs to the MnmG family. As to quaternary structure, homodimer. Heterotetramer of two MnmE and two MnmG subunits. The cofactor is FAD.

It localises to the cytoplasm. Its function is as follows. NAD-binding protein involved in the addition of a carboxymethylaminomethyl (cmnm) group at the wobble position (U34) of certain tRNAs, forming tRNA-cmnm(5)s(2)U34. This chain is tRNA uridine 5-carboxymethylaminomethyl modification enzyme MnmG, found in Granulibacter bethesdensis (strain ATCC BAA-1260 / CGDNIH1).